Reading from the N-terminus, the 401-residue chain is Exodeoxyribonuclease 7 large subunit (401 aa).

The protein belongs to the XseA family. Heterooligomer composed of large and small subunits.

The protein localises to the cytoplasm. The catalysed reaction is Exonucleolytic cleavage in either 5'- to 3'- or 3'- to 5'-direction to yield nucleoside 5'-phosphates.. Bidirectionally degrades single-stranded DNA into large acid-insoluble oligonucleotides, which are then degraded further into small acid-soluble oligonucleotides. The polypeptide is Exodeoxyribonuclease 7 large subunit (Thermoanaerobacter pseudethanolicus (strain ATCC 33223 / 39E) (Clostridium thermohydrosulfuricum)).